A 582-amino-acid chain; its full sequence is tRNA-guanine(15) transglycosylase (582 aa).

Residue Asp95 is the Nucleophile of the active site. Residues Asp130 and Gly196 each contribute to the substrate site. Cys279, Cys281, and Cys284 together coordinate Zn(2+). One can recognise a PUA domain in the interval 507–582 (RMRVVVNKEA…RAVKVRKGVE (76 aa)).

Belongs to the archaeosine tRNA-ribosyltransferase family. As to quaternary structure, homodimer. It depends on Zn(2+) as a cofactor.

The catalysed reaction is guanosine(15) in tRNA + 7-cyano-7-deazaguanine = 7-cyano-7-carbaguanosine(15) in tRNA + guanine. The protein operates within tRNA modification; archaeosine-tRNA biosynthesis. Its function is as follows. Exchanges the guanine residue with 7-cyano-7-deazaguanine (preQ0) at position 15 in the dihydrouridine loop (D-loop) of archaeal tRNAs. The polypeptide is tRNA-guanine(15) transglycosylase (tgtA) (Pyrococcus horikoshii (strain ATCC 700860 / DSM 12428 / JCM 9974 / NBRC 100139 / OT-3)).